A 2271-amino-acid polypeptide reads, in one-letter code: Serine-rich adhesin for platelets (2271 aa).

Positions 1-89 (MSKRQKAFHD…VNMLHDQQAF (89 aa)) are cleaved as a signal peptide. The tract at residues 90-230 (AASDAPLTSE…KTSTTSTSTA (141 aa)) is serine-rich repeat region 1, SRR1. Polar residues predominate over residues 100–111 (LNTQSETVGNQN). Disordered stretches follow at residues 100–229 (LNTQ…STST), 751–791 (NSMS…VVST), and 806–2243 (SVSA…GLLG). Low complexity predominate over residues 112–128 (STTIEASTSTADSTSVT). Polar residues predominate over residues 129–140 (KNSSSVQTSNSD). Residues 150–229 (VTSTTNSTSN…NKTSTTSTST (80 aa)) show a composition bias toward low complexity. The interval 231 to 751 (PVKLRTFSRL…TTFKYEVTRN (521 aa)) is non-repeat region (NRR). Low complexity-rich tracts occupy residues 752–791 (SMSD…VVST), 806–1392 (SVSA…LSLS), and 1402–2214 (SNSA…ATSE). Positions 752–2232 (SMSDSVSTSG…AQSEKRLPDT (1481 aa)) are serine-rich repeat region 2, SRR2. Residues 2229–2233 (LPDTG) carry the LPXTG sorting signal motif. At T2232 the chain carries Pentaglycyl murein peptidoglycan amidated threonine. Positions 2233–2271 (GDSIKQNGLLGGVMTLLVGLGLMKRKKKKDENDQDDSQA) are cleaved as a propeptide — removed by sortase.

This sequence belongs to the serine-rich repeat protein (SRRP) family. In terms of processing, proteolytically cleaved by a metalloprotease. Glycosylated. It is probable that most of the Ser residues in SSR1 and SSR2 are O-GlcNAcylated. Sequential glycosylation by sugar transferases are able to generate complex sugar polymorphisms.

The protein localises to the secreted. Its subcellular location is the cell wall. In terms of biological role, mediates binding to human platelets, possibly through a receptor-ligand interaction. Probably associated with virulence in endovascular infection. The polypeptide is Serine-rich adhesin for platelets (sraP) (Staphylococcus aureus (strain Mu50 / ATCC 700699)).